The sequence spans 152 residues: Superoxide dismutase [Cu-Zn] (152 aa).

Residues His45, His47, and His62 each coordinate Cu cation. Cys56 and Cys145 are oxidised to a cystine. 4 residues coordinate Zn(2+): His62, His70, His79, and Asp82. A Cu cation-binding site is contributed by His119.

Belongs to the Cu-Zn superoxide dismutase family. Homodimer. The cofactor is Cu cation. It depends on Zn(2+) as a cofactor.

Its subcellular location is the cytoplasm. The catalysed reaction is 2 superoxide + 2 H(+) = H2O2 + O2. Its function is as follows. Destroys radicals which are normally produced within the cells and which are toxic to biological systems. This chain is Superoxide dismutase [Cu-Zn] (SODCC), found in Panax ginseng (Korean ginseng).